Consider the following 802-residue polypeptide: Probable inactive leucine-rich repeat receptor-like protein kinase At3g03770 (802 aa).

The signal sequence occupies residues 1 to 26 (MEKLYCGMPLLLLVLLLASIDGSTQL). The Extracellular segment spans residues 27–391 (QSSQSQTLLR…RNKVSKVGIA (365 aa)). Asn52 and Asn83 each carry an N-linked (GlcNAc...) asparagine glycan. 11 LRR repeats span residues 71–94 (EDSVTQLHIIGDNGTHMLPKSFSI), 104–128 (LPDVKVLTFVSLGLWGWLPQKINRL), 129–152 (SSLEILNVSSNFLFGPIPHELSSL), 153–176 (ATLQTLILDENMFSGELPDWIDSL), 177–200 (PSLAVLSLRKNVLNGSLPSSLSSL), 201–225 (SGLRVLALANNRFNGALPDLSHLTN), 227–244 (QVLDLEGNSFGPLFPRLS), 245–268 (NKLVTLILSKNKFRSAVSAEEVSS), 269–293 (LYQLQHLDLSYNTFVGPFPTSLMSL), 294–317 (PAITYLNISHNKLTGRLSANLSCN), and 319–341 (QLMFVDMSSNLLTGSLPTCLKPS). The N-linked (GlcNAc...) asparagine glycan is linked to Asn135. A glycan (N-linked (GlcNAc...) asparagine) is linked at Asn190. Asn300 and Asn313 each carry an N-linked (GlcNAc...) asparagine glycan. The chain crosses the membrane as a helical span at residues 392-412 (LGVTASILGVLLLAGALFVVL). Residues 413-802 (RRLNAKKTVT…RDSGCEEHER (390 aa)) lie on the Cytoplasmic side of the membrane. In terms of domain architecture, Protein kinase spans 477–759 (FESSAFMGEG…FASQVQEGWL (283 aa)). The disordered stretch occupies residues 761–802 (NSNPSSNLGSPSPAASSLPPPSRLHVTTLESPRDSGCEEHER). Positions 762-777 (SNPSSNLGSPSPAASS) are enriched in low complexity. Over residues 791–802 (SPRDSGCEEHER) the composition is skewed to basic and acidic residues.

It belongs to the protein kinase superfamily. Ser/Thr protein kinase family.

It is found in the cell membrane. The protein is Probable inactive leucine-rich repeat receptor-like protein kinase At3g03770 of Arabidopsis thaliana (Mouse-ear cress).